Consider the following 343-residue polypeptide: KRR1 small subunit processome component homolog (343 aa).

In terms of domain architecture, KH spans 125-193 (DIIKIGNLVH…VRDIVVETMN (69 aa)). Positions 232–245 (NISKRKQPKVKKAK) are enriched in basic residues. Positions 232–343 (NISKRKQPKV…KLLKANKKKV (112 aa)) are disordered. A coiled-coil region spans residues 270 to 302 (FLNKEQKQAKRQQERSAKQADAAKRQDERRNKD). Positions 271 to 302 (LNKEQKQAKRQQERSAKQADAAKRQDERRNKD) are enriched in basic and acidic residues. The span at 331–343 (LKAKLLKANKKKV) shows a compositional bias: basic residues.

It belongs to the KRR1 family. In terms of assembly, monomer. Component of the ribosomal small subunit (SSU) processome.

It localises to the nucleus. The protein resides in the nucleolus. Its function is as follows. Required for 40S ribosome biogenesis. Involved in nucleolar processing of pre-18S ribosomal RNA and ribosome assembly. Binds to RNA. Required for female germline development, cell viability during eye development and for survival of dividing cells and epithelial cells during early wing disk development. The chain is KRR1 small subunit processome component homolog from Drosophila ananassae (Fruit fly).